We begin with the raw amino-acid sequence, 341 residues long: Putative UPF0607 protein ENSP00000383144 (341 aa).

Disordered stretches follow at residues 70–131 and 218–279; these read RLPK…NPRP and LMVG…PPAK. Residues 72–101 show a composition bias toward basic and acidic residues; that stretch reads PKTEVRAEEPKEATEVKDQVETQEQEDNKR. A compositionally biased stretch (polar residues) spans 108 to 127; sequence EAASTSRPLETQGNLTSSWY. A compositionally biased stretch (basic residues) spans 243 to 252; the sequence is AGHRSHKRKL.

It belongs to the UPF0607 family.

In Homo sapiens (Human), this protein is Putative UPF0607 protein ENSP00000383144.